Reading from the N-terminus, the 327-residue chain is Phenylalanine--tRNA ligase alpha subunit (327 aa).

A Mg(2+)-binding site is contributed by Glu-252.

Belongs to the class-II aminoacyl-tRNA synthetase family. Phe-tRNA synthetase alpha subunit type 1 subfamily. Tetramer of two alpha and two beta subunits. The cofactor is Mg(2+).

The protein resides in the cytoplasm. The catalysed reaction is tRNA(Phe) + L-phenylalanine + ATP = L-phenylalanyl-tRNA(Phe) + AMP + diphosphate + H(+). The chain is Phenylalanine--tRNA ligase alpha subunit from Yersinia enterocolitica serotype O:8 / biotype 1B (strain NCTC 13174 / 8081).